We begin with the raw amino-acid sequence, 178 residues long: Protein GrpE (178 aa).

The segment covering 1–11 has biased composition (polar residues); it reads MENTQENPTDQ. The disordered stretch occupies residues 1 to 31; it reads MENTQENPTDQTTEETGREAQAAENAAPAAE. The span at 19–31 shows a compositional bias: low complexity; it reads EAQAAENAAPAAE.

It belongs to the GrpE family. In terms of assembly, homodimer.

It localises to the cytoplasm. Participates actively in the response to hyperosmotic and heat shock by preventing the aggregation of stress-denatured proteins, in association with DnaK and GrpE. It is the nucleotide exchange factor for DnaK and may function as a thermosensor. Unfolded proteins bind initially to DnaJ; upon interaction with the DnaJ-bound protein, DnaK hydrolyzes its bound ATP, resulting in the formation of a stable complex. GrpE releases ADP from DnaK; ATP binding to DnaK triggers the release of the substrate protein, thus completing the reaction cycle. Several rounds of ATP-dependent interactions between DnaJ, DnaK and GrpE are required for fully efficient folding. The protein is Protein GrpE of Burkholderia thailandensis (strain ATCC 700388 / DSM 13276 / CCUG 48851 / CIP 106301 / E264).